The primary structure comprises 232 residues: Large ribosomal subunit protein uL1 (232 aa).

This sequence belongs to the universal ribosomal protein uL1 family. In terms of assembly, part of the 50S ribosomal subunit.

Binds directly to 23S rRNA. The L1 stalk is quite mobile in the ribosome, and is involved in E site tRNA release. Functionally, protein L1 is also a translational repressor protein, it controls the translation of the L11 operon by binding to its mRNA. The sequence is that of Large ribosomal subunit protein uL1 from Aliarcobacter butzleri (strain RM4018) (Arcobacter butzleri).